The following is a 303-amino-acid chain: Coenzyme PQQ synthesis protein B (303 aa).

It belongs to the PqqB family.

It functions in the pathway cofactor biosynthesis; pyrroloquinoline quinone biosynthesis. Its function is as follows. May be involved in the transport of PQQ or its precursor to the periplasm. This Acinetobacter baumannii (strain ACICU) protein is Coenzyme PQQ synthesis protein B.